We begin with the raw amino-acid sequence, 1023 residues long: Sodium/potassium-transporting ATPase subunit alpha-1 (1023 aa).

The propeptide occupies 1 to 5 (MGKGV). The span at 1 to 11 (MGKGVGRDKYE) shows a compositional bias: basic and acidic residues. The segment at 1 to 39 (MGKGVGRDKYEPAAVSEHGDKKGKKAKKERDMDELKKEV) is disordered. Residues 6–96 (GRDKYEPAAV…PEWVKFCRQL (91 aa)) lie on the Cytoplasmic side of the membrane. Lys9 carries the post-translational modification N6-acetyllysine. Tyr10 is modified (phosphotyrosine). The residue at position 16 (Ser16) is a Phosphoserine. Lys21 bears the N6-acetyllysine mark. Residues 28–39 (KERDMDELKKEV) are compositionally biased toward basic and acidic residues. A phosphoserine mark is found at Ser40 and Ser47. The segment at 82-84 (PPP) is phosphoinositide-3 kinase binding. The helical transmembrane segment at 97 to 117 (FGGFSMLLWIGAILCFLAYGI) threads the bilayer. Topologically, residues 118–129 (RSATEEEPPNDD) are extracellular. A helical transmembrane segment spans residues 130–150 (LYLGVVLSAVVIITGCFSYYQ). At 151 to 291 (EAKSSKIMES…TPIAEEIEHF (141 aa)) the chain is on the cytoplasmic side. The tract at residues 216–235 (SSLTGESEPQTRSPDFTNEN) is disordered. A Phosphoserine modification is found at Ser228. Position 260 is a phosphotyrosine (Tyr260). A helical membrane pass occupies residues 292-312 (IHLITGVAVFLGVSFFILSLI). Over 313–319 (LEYTWLE) the chain is Extracellular. A helical transmembrane segment spans residues 320–340 (AVIFLIGIIVANVPEGLLATV). Residues 341–775 (TVCLTLTAKR…RLIFDNLKKS (435 aa)) lie on the Cytoplasmic side of the membrane. The 4-aspartylphosphate intermediate role is filled by Asp376. Phosphoserine occurs at positions 452 and 484. Residue Lys487 participates in ATP binding. Phosphotyrosine is present on Tyr542. The mediates interaction with SCN7A stretch occupies residues 596–717 (RAAVPDAVGK…QGAIVAVTGD (122 aa)). Residue Lys661 is modified to N6-succinyllysine. Ser668 and Ser675 each carry phosphoserine. Residues Asp717 and Asp721 each coordinate Mg(2+). Residues 776–798 (IAYTLTSNIPEITPFLIFIIANI) traverse the membrane as a helical segment. The Extracellular segment spans residues 799–801 (PLP). Residues 802–824 (LGTVTILCIDLGTDMVPAISLAY) form a helical membrane-spanning segment. Residues 825–849 (EQAESDIMKRQPRNPKTDKLVNERL) lie on the Cytoplasmic side of the membrane. Residues 850 to 872 (ISMAYGQIGMIQALGGFFTYFVI) form a helical membrane-spanning segment. Topologically, residues 873–915 (LAENGFLPFHLLGIRETWDDRWVNDVEDSYGQQWTYEQRKIVE) are extracellular. A helical transmembrane segment spans residues 916–936 (FTCHTAFFVSIVVVQWADLVI). The Cytoplasmic segment spans residues 937-952 (CKTRRNSVFQQGMKNK). Ser943 is modified (phosphoserine; by PKA). Residues 953–973 (ILIFGLFEETALAAFLSYCPG) traverse the membrane as a helical segment. The Extracellular portion of the chain corresponds to 974–979 (MGAALR). Residues 980 to 1000 (MYPLKPTWWFCAFPYSLLIFV) traverse the membrane as a helical segment. Topologically, residues 1001-1023 (YDEVRKLIIRRRPGGWVEKETYY) are cytoplasmic.

This sequence belongs to the cation transport ATPase (P-type) (TC 3.A.3) family. Type IIC subfamily. As to quaternary structure, the sodium/potassium-transporting ATPase is composed of a catalytic alpha subunit, an auxiliary non-catalytic beta subunit and an additional regulatory subunit. Interacts with regulatory subunit FXYD1. Interacts with regulatory subunit FXYD3. Interacts with SIK1. Interacts with SLC35G1 and STIM1. Interacts with CLN3; this interaction regulates the sodium/potassium-transporting ATPase complex localization at the plasma membrane. Interacts with SCN7A; activates ATP1A1 P-type sodium:potassium-exchanging transporter activity which indirectly signals to nearby neurons to regulate sodium homeostasis. In terms of processing, phosphorylation on Tyr-10 modulates pumping activity. Phosphorylation of Ser-943 by PKA modulates the response of ATP1A1 to PKC. Dephosphorylation by protein phosphatase 2A (PP2A) following increases in intracellular sodium, leading to increase catalytic activity.

The protein resides in the cell membrane. It is found in the basolateral cell membrane. The protein localises to the sarcolemma. Its subcellular location is the cell projection. It localises to the axon. The protein resides in the melanosome. The catalysed reaction is K(+)(out) + Na(+)(in) + ATP + H2O = K(+)(in) + Na(+)(out) + ADP + phosphate + H(+). This is the catalytic component of the active enzyme, which catalyzes the hydrolysis of ATP coupled with the exchange of sodium and potassium ions across the plasma membrane. This action creates the electrochemical gradient of sodium and potassium ions, providing the energy for active transport of various nutrients. Could also be part of an osmosensory signaling pathway that senses body-fluid sodium levels and controls salt intake behavior as well as voluntary water intake to regulate sodium homeostasis. The polypeptide is Sodium/potassium-transporting ATPase subunit alpha-1 (Atp1a1) (Mus musculus (Mouse)).